A 946-amino-acid chain; its full sequence is Bifunctional glutamine synthetase adenylyltransferase/adenylyl-removing enzyme (946 aa).

An adenylyl removase region spans residues 1–440 (MKPLSSPLQQ…VFNELIGDDE (440 aa)). Residues 449-946 (SEQWRELWQD…ASWQKWLVEE (498 aa)) form an adenylyl transferase region.

It belongs to the GlnE family. Mg(2+) serves as cofactor.

The enzyme catalyses [glutamine synthetase]-O(4)-(5'-adenylyl)-L-tyrosine + phosphate = [glutamine synthetase]-L-tyrosine + ADP. It carries out the reaction [glutamine synthetase]-L-tyrosine + ATP = [glutamine synthetase]-O(4)-(5'-adenylyl)-L-tyrosine + diphosphate. Involved in the regulation of glutamine synthetase GlnA, a key enzyme in the process to assimilate ammonia. When cellular nitrogen levels are high, the C-terminal adenylyl transferase (AT) inactivates GlnA by covalent transfer of an adenylyl group from ATP to specific tyrosine residue of GlnA, thus reducing its activity. Conversely, when nitrogen levels are low, the N-terminal adenylyl removase (AR) activates GlnA by removing the adenylyl group by phosphorolysis, increasing its activity. The regulatory region of GlnE binds the signal transduction protein PII (GlnB) which indicates the nitrogen status of the cell. This Escherichia coli O45:K1 (strain S88 / ExPEC) protein is Bifunctional glutamine synthetase adenylyltransferase/adenylyl-removing enzyme.